Reading from the N-terminus, the 451-residue chain is Tubulin gamma-1 chain (451 aa).

Residue serine 131 is modified to Phosphoserine; by BRSK1. 142–148 (AGGTGSG) serves as a coordination point for GTP.

It belongs to the tubulin family. In terms of assembly, component of the gamma-tubulin ring complex (gTuRC) consisting of TUBGCP2, TUBGCP3, TUBGCP4, TUBGCP5 and TUBGCP6 and gamma-tubulin TUBG1 or TUBG2. TUBGCP2, TUBGCP3, TUBGCP4, TUBGCP5 and TUBGCP6 assemble in a 5:5:2:1:1 stoichiometry; each is associated with a gamma-tubulin, thereby arranging 14 gamma-tubulins in a helical manner. Gamma-tubulin at the first position is blocked by TUBGCP3 at the last position, allowing 13 protafilaments to grow into a microtubule. The gTuRC (via TUBGCP3 and TUBGCP6) interacts with ACTB and MZT1; the interactions form a luminal bridge that stabilizes the initial structure during complex assembly. The gTuRC (via TUBGCP2) interacts with MZT2A/MZT2B and CDK5RAP2 (via CM1 motif); the interactions play a role in gTuRC activation. Interacts with alpha-beta tubulin heterodimers; the interaction allows microtubules to nucleate from the gTuRC. Interacts with B9D2. Interacts with CDK5RAP2; the interaction is leading to centrosomal localization of TUBG1 and CDK5RAP2. Interacts with CIMAP3. Interacts with SAS6 and NUP62 at the centrosome. Interacts with EML3 (phosphorylated at 'Thr-881') and HAUS8. Interacts with DNM2; this interaction may participate in centrosome cohesion. Interacts with CCDC66. Post-translationally, phosphorylation at Ser-131 by BRSK1 regulates centrosome duplication, possibly by mediating relocation of gamma-tubulin and its associated proteins from the cytoplasm to the centrosome.

Its subcellular location is the cytoplasm. The protein localises to the cytoskeleton. The protein resides in the microtubule organizing center. It localises to the centrosome. It is found in the spindle. Tubulin is the major constituent of microtubules, protein filaments consisting of alpha- and beta-tubulin heterodimers. Gamma-tubulin is a key component of the gamma-tubulin ring complex (gTuRC) which mediates microtubule nucleation. The gTuRC regulates the minus-end nucleation of alpha-beta tubulin heterodimers that grow into microtubule protafilaments, a critical step in centrosome duplication and spindle formation. The protein is Tubulin gamma-1 chain of Homo sapiens (Human).